The primary structure comprises 212 residues: Proteasome subunit beta 2 (212 aa).

The propeptide at Met-1–Gly-15 is removed in mature form; by autocatalysis. Thr-16 functions as the Nucleophile in the catalytic mechanism.

This sequence belongs to the peptidase T1B family. The 20S proteasome core is composed of 14 alpha and 14 beta subunits that assemble into four stacked heptameric rings, resulting in a barrel-shaped structure. The two inner rings, each composed of seven catalytic beta subunits, are sandwiched by two outer rings, each composed of seven alpha subunits. The catalytic chamber with the active sites is on the inside of the barrel. Has a gated structure, the ends of the cylinder being occluded by the N-termini of the alpha-subunits. Is capped at one or both ends by the proteasome regulatory ATPase, PAN.

The protein localises to the cytoplasm. It catalyses the reaction Cleavage of peptide bonds with very broad specificity.. Its activity is regulated as follows. The formation of the proteasomal ATPase PAN-20S proteasome complex, via the docking of the C-termini of PAN into the intersubunit pockets in the alpha-rings, triggers opening of the gate for substrate entry. Interconversion between the open-gate and close-gate conformations leads to a dynamic regulation of the 20S proteasome proteolysis activity. In terms of biological role, component of the proteasome core, a large protease complex with broad specificity involved in protein degradation. The sequence is that of Proteasome subunit beta 2 from Hyperthermus butylicus (strain DSM 5456 / JCM 9403 / PLM1-5).